The primary structure comprises 111 residues: Colipase (111 aa).

The first 17 residues, M1–A17, serve as a signal peptide directing secretion. The propeptide at A18–R22 is enterostatin, activation peptide. Cystine bridges form between C34-C45, C40-C56, C44-C78, C66-C86, and C80-C104.

It belongs to the colipase family. As to quaternary structure, forms a 1:1 stoichiometric complex with pancreatic lipase. Expressed by the pancreas.

It is found in the secreted. Functionally, colipase is a cofactor of pancreatic lipase. It allows the lipase to anchor itself to the lipid-water interface. Without colipase the enzyme is washed off by bile salts, which have an inhibitory effect on the lipase. Its function is as follows. Enterostatin has a biological activity as a satiety signal. This is Colipase (CLPS) from Myocastor coypus (Coypu).